A 187-amino-acid polypeptide reads, in one-letter code: MGNEQKMIDRIIADAKQEAQEILDKAKSEADLKVNSANEKAEKEMASYTKLAEAEAEKAASKEISGAYMEAKKQILSKKQEILEEVILEAKNKLLNLKDNEYEEIILNMIEKSNCTDDSEIVLSKKDKKTLKDVLSKKGIKVSDETRDITGGFIVKKGDIEYNYSFEAIIAVEHEYIEQIAAEILFN.

The protein belongs to the V-ATPase E subunit family.

In terms of biological role, produces ATP from ADP in the presence of a proton gradient across the membrane. The polypeptide is V-type ATP synthase subunit E (Clostridioides difficile (strain 630) (Peptoclostridium difficile)).